The following is a 140-amino-acid chain: Large ribosomal subunit protein bL17 (140 aa).

The protein belongs to the bacterial ribosomal protein bL17 family. Part of the 50S ribosomal subunit. Contacts protein L32.

This Rhizobium johnstonii (strain DSM 114642 / LMG 32736 / 3841) (Rhizobium leguminosarum bv. viciae) protein is Large ribosomal subunit protein bL17.